Consider the following 397-residue polypeptide: Pyruvate dehydrogenase E1 component subunit alpha, mitochondrial (397 aa).

Residues histidine 98, tyrosine 124, arginine 125, glycine 173, valine 175, aspartate 204, glycine 205, alanine 206, asparagine 233, and tyrosine 235 each coordinate pyruvate. Residues tyrosine 124, arginine 125, glycine 173, valine 175, aspartate 204, glycine 205, alanine 206, and asparagine 233 each contribute to the thiamine diphosphate site. Residue aspartate 204 participates in Mg(2+) binding. Mg(2+) is bound by residues asparagine 233 and tyrosine 235. Position 299 (histidine 299) interacts with thiamine diphosphate.

Tetramer of 2 alpha and 2 beta subunits. Requires thiamine diphosphate as cofactor. It depends on Mg(2+) as a cofactor.

Its subcellular location is the mitochondrion matrix. It catalyses the reaction N(6)-[(R)-lipoyl]-L-lysyl-[protein] + pyruvate + H(+) = N(6)-[(R)-S(8)-acetyldihydrolipoyl]-L-lysyl-[protein] + CO2. E1 activity is regulated by phosphorylation (inactivation) and dephosphorylation (activation) of the alpha subunit. Functionally, the pyruvate dehydrogenase complex catalyzes the overall conversion of pyruvate to acetyl-CoA and CO(2). It contains multiple copies of three enzymatic components: pyruvate dehydrogenase (E1), dihydrolipoamide acetyltransferase (E2) and lipoamide dehydrogenase (E3). The sequence is that of Pyruvate dehydrogenase E1 component subunit alpha, mitochondrial from Pisum sativum (Garden pea).